We begin with the raw amino-acid sequence, 492 residues long: 2-succinylbenzoate--CoA ligase (492 aa).

The protein belongs to the ATP-dependent AMP-binding enzyme family. MenE subfamily.

The enzyme catalyses 2-succinylbenzoate + ATP + CoA = 2-succinylbenzoyl-CoA + AMP + diphosphate. Its pathway is quinol/quinone metabolism; 1,4-dihydroxy-2-naphthoate biosynthesis; 1,4-dihydroxy-2-naphthoate from chorismate: step 5/7. It participates in quinol/quinone metabolism; menaquinone biosynthesis. Its function is as follows. Converts 2-succinylbenzoate (OSB) to 2-succinylbenzoyl-CoA (OSB-CoA). The polypeptide is 2-succinylbenzoate--CoA ligase (Staphylococcus aureus (strain MSSA476)).